Here is a 332-residue protein sequence, read N- to C-terminus: 5,10-methylenetetrahydromethanopterin reductase (332 aa).

Belongs to the mer family.

The protein resides in the cytoplasm. The catalysed reaction is 5-methyl-5,6,7,8-tetrahydromethanopterin + oxidized coenzyme F420-(gamma-L-Glu)(n) + H(+) = 5,10-methylenetetrahydromethanopterin + reduced coenzyme F420-(gamma-L-Glu)(n). The protein operates within metabolic intermediate metabolism; lactate oxidation. Catalyzes the oxidation of methyl-H(4)MPT to methylene-H(4)MPT. The protein is 5,10-methylenetetrahydromethanopterin reductase of Archaeoglobus fulgidus (strain ATCC 49558 / DSM 4304 / JCM 9628 / NBRC 100126 / VC-16).